We begin with the raw amino-acid sequence, 183 residues long: Lipid droplet coating protein Cap20 (183 aa).

This sequence belongs to the perilipin family.

The protein resides in the lipid droplet. Lipid droplet coating protein that regulates lipid metabolism, appressorial turgor pressure, and virulence. Appressorial turgor pressure is important for the mechanical penetration of the host cuticle during infection. The protein is Lipid droplet coating protein Cap20 (Cap20) of Colletotrichum gloeosporioides (Anthracnose fungus).